We begin with the raw amino-acid sequence, 643 residues long: Transducer protein Htr8 (643 aa).

Helical transmembrane passes span 48–68 (VFVL…GTES), 79–99 (PGIL…LASI), 115–134 (VLAS…EAHF), 149–169 (WLPF…FGMI), and 184–204 (PWVW…ALMA). Positions 273–326 (ERLEATANTYGAAMARAADGDLSVRLDPDVENDAMAAIAASFNEMLDETETTIR) constitute an HAMP domain. Positions 345 to 581 (GVVEIEDASG…EAVSMIAEVS (237 aa)) constitute a Methyl-accepting transducer domain.

This sequence belongs to the methyl-accepting chemotaxis (MCP) protein family. In terms of processing, methylated by CheR.

It is found in the cell membrane. Potentially involved in chemo- or phototactic signal transduction. The protein is Transducer protein Htr8 (htr8) of Halobacterium salinarum (strain ATCC 29341 / DSM 671 / R1).